The primary structure comprises 238 residues: Protein-lysine N-methyltransferase efm4 (238 aa).

Belongs to the class I-like SAM-binding methyltransferase superfamily. EFM4 family.

Its subcellular location is the cytoplasm. It localises to the nucleus. S-adenosyl-L-methionine-dependent protein-lysine N-methyltransferase that mono- and dimethylates elongation factor 1-alpha at 'Lys-316'. May play a role in intracellular transport. The chain is Protein-lysine N-methyltransferase efm4 from Schizosaccharomyces pombe (strain 972 / ATCC 24843) (Fission yeast).